Here is a 305-residue protein sequence, read N- to C-terminus: Homoserine O-acetyltransferase (305 aa).

The Acyl-thioester intermediate role is filled by C142. Residues K163 and S192 each coordinate substrate. H235 (proton acceptor) is an active-site residue. The active site involves E237. Residue R249 coordinates substrate.

It belongs to the MetA family.

It is found in the cytoplasm. The enzyme catalyses L-homoserine + acetyl-CoA = O-acetyl-L-homoserine + CoA. Its pathway is amino-acid biosynthesis; L-methionine biosynthesis via de novo pathway; O-acetyl-L-homoserine from L-homoserine: step 1/1. Transfers an acetyl group from acetyl-CoA to L-homoserine, forming acetyl-L-homoserine. The protein is Homoserine O-acetyltransferase of Bacteroides thetaiotaomicron (strain ATCC 29148 / DSM 2079 / JCM 5827 / CCUG 10774 / NCTC 10582 / VPI-5482 / E50).